The chain runs to 203 residues: Urease accessory protein UreG (203 aa).

Position 14 to 21 (14 to 21 (GPVGAGKT)) interacts with GTP.

It belongs to the SIMIBI class G3E GTPase family. UreG subfamily. As to quaternary structure, homodimer. UreD, UreF and UreG form a complex that acts as a GTP-hydrolysis-dependent molecular chaperone, activating the urease apoprotein by helping to assemble the nickel containing metallocenter of UreC. The UreE protein probably delivers the nickel.

Its subcellular location is the cytoplasm. Its function is as follows. Facilitates the functional incorporation of the urease nickel metallocenter. This process requires GTP hydrolysis, probably effectuated by UreG. The polypeptide is Urease accessory protein UreG (Jannaschia sp. (strain CCS1)).